The chain runs to 157 residues: UPF0587 protein C2D10.03c (157 aa).

Zn(2+) contacts are provided by C34, C37, C68, and C71.

This sequence belongs to the UPF0587 family.

The sequence is that of UPF0587 protein C2D10.03c from Schizosaccharomyces pombe (strain 972 / ATCC 24843) (Fission yeast).